The sequence spans 267 residues: Apolipoprotein A-I (267 aa).

Positions 1–18 are cleaved as a signal peptide; the sequence is MKATVLTLAVLFLTGSQA. Tandem repeats lie at residues 68–89 and 90–111. Residues 68–267 are 10 X approximate tandem repeats; the sequence is LKLLDNWDSV…EEYTKKLSTQ (200 aa). Met-110 carries the post-translational modification Methionine sulfoxide. A 3; half-length repeat occupies 112–122; sequence KDLEEVKAKVQ. Tandem repeats lie at residues 123–144, 145–166, 167–188, 189–210, and 211–232. Met-136 is modified (methionine sulfoxide). The stretch at 233 to 243 is one 9; half-length repeat; the sequence is PALEDLRQGLL. The stretch at 244–267 is repeat 10; the sequence is PVLESFKVSFLSALEEYTKKLSTQ.

This sequence belongs to the apolipoprotein A1/A4/E family. In terms of assembly, homodimer. Interacts with APOA1BP and CLU. Component of a sperm activating protein complex (SPAP), consisting of APOA1, an immunoglobulin heavy chain, an immunoglobulin light chain and albumin. Interacts with NDRG1. Interacts with SCGB3A2. Interacts with NAXE and YJEFN3. In terms of processing, glycosylated. Post-translationally, palmitoylated. Phosphorylation sites are present in the extracellular medium. As to expression, major protein of plasma HDL, also found in chylomicrons.

It is found in the secreted. Functionally, participates in the reverse transport of cholesterol from tissues to the liver for excretion by promoting cholesterol efflux from tissues and by acting as a cofactor for the lecithin cholesterol acyltransferase (LCAT). As part of the SPAP complex, activates spermatozoa motility. The sequence is that of Apolipoprotein A-I (APOA1) from Papio hamadryas (Hamadryas baboon).